Consider the following 418-residue polypeptide: Creatine kinase U-type, mitochondrial (418 aa).

The transit peptide at Met-1–Ala-39 directs the protein to the mitochondrion. Positions Ala-40–Met-64 are cardiolipin-binding. Positions Arg-46 to Asn-132 constitute a Phosphagen kinase N-terminal domain. Ser-152 is subject to Phosphoserine. Residues Tyr-159–Leu-401 enclose the Phosphagen kinase C-terminal domain. Ser-162 to Arg-166 is a binding site for ATP. Residue Ser-197 is modified to Phosphoserine. Thr-214 carries the phosphothreonine modification. Position 225 (His-225) interacts with ATP. Position 233 is a phosphoserine (Ser-233). ATP is bound by residues Arg-270, Arg-326, and Arg-354–Val-359. Phosphothreonine is present on Thr-356. Position 366 is a phosphoserine (Ser-366). Asp-369 contacts ATP.

The protein belongs to the ATP:guanido phosphotransferase family. As to quaternary structure, exists as an octamer composed of four MTCK homodimers.

It is found in the mitochondrion inner membrane. The enzyme catalyses creatine + ATP = N-phosphocreatine + ADP + H(+). Functionally, reversibly catalyzes the transfer of phosphate between ATP and various phosphogens (e.g. creatine phosphate). Creatine kinase isoenzymes play a central role in energy transduction in tissues with large, fluctuating energy demands, such as skeletal muscle, heart, brain and spermatozoa. The sequence is that of Creatine kinase U-type, mitochondrial (Ckmt1) from Mus musculus (Mouse).